The sequence spans 365 residues: tRNA-specific 2-thiouridylase MnmA (365 aa).

ATP contacts are provided by residues 6-13 and Leu32; that span reads AMSGGVDS. The active-site Nucleophile is the Cys101. The cysteines at positions 101 and 199 are disulfide-linked. Gly125 is an ATP binding site. The tract at residues 149–151 is interaction with tRNA; the sequence is KDQ. Cys199 acts as the Cysteine persulfide intermediate in catalysis.

This sequence belongs to the MnmA/TRMU family.

It is found in the cytoplasm. It carries out the reaction S-sulfanyl-L-cysteinyl-[protein] + uridine(34) in tRNA + AH2 + ATP = 2-thiouridine(34) in tRNA + L-cysteinyl-[protein] + A + AMP + diphosphate + H(+). Functionally, catalyzes the 2-thiolation of uridine at the wobble position (U34) of tRNA, leading to the formation of s(2)U34. The chain is tRNA-specific 2-thiouridylase MnmA from Corynebacterium glutamicum (strain R).